The chain runs to 245 residues: Probable phosphatase YcdX (245 aa).

Zn(2+) contacts are provided by His-7, His-9, His-15, His-40, Glu-73, His-101, His-131, Asp-192, and His-194.

It belongs to the PHP family. As to quaternary structure, homotrimer. Zn(2+) serves as cofactor.

In Escherichia coli O139:H28 (strain E24377A / ETEC), this protein is Probable phosphatase YcdX.